A 458-amino-acid polypeptide reads, in one-letter code: Pentatricopeptide repeat-containing protein At1g77405 (458 aa).

7 PPR repeats span residues 164–198 (TTAS…HCKP), 199–233 (DVYA…GFRY), 236–271 (DTYT…NRMF), 282–316 (DVVT…GCVP), 317–351 (NQVT…GHGV), 353–387 (GSST…GLVP), and 388–419 (REYT…MREG).

Belongs to the PPR family. P subfamily.

The sequence is that of Pentatricopeptide repeat-containing protein At1g77405 from Arabidopsis thaliana (Mouse-ear cress).